Here is a 139-residue protein sequence, read N- to C-terminus: Single-stranded DNA-binding protein 2 (139 aa).

An SSB domain is found at 1-104 (MLNRTVLVGR…VVADSVQFLE (104 aa)). The segment at 103–139 (LEPKNNNKQNNQQHNGQTQTGNNPFDNTEEDFSDLPF) is disordered. The segment covering 106 to 125 (KNNNKQNNQQHNGQTQTGNN) has biased composition (low complexity). Acidic residues predominate over residues 129 to 139 (NTEEDFSDLPF).

As to quaternary structure, homotetramer.

This Staphylococcus aureus (strain COL) protein is Single-stranded DNA-binding protein 2 (ssb-p).